The following is a 687-amino-acid chain: ERI1 exoribonuclease 2 (687 aa).

The 189-residue stretch at 38–226 (LIIIDFESTC…DDSRNTAKLA (189 aa)) folds into the Exonuclease domain. Positions 42, 44, and 156 each coordinate Mg(2+). Glu44 acts as the Proton acceptor in catalysis. AMP is bound at residue Glu44. The active-site Proton acceptor is the His213. An AMP-binding site is contributed by His213. Asp218 serves as a coordination point for Mg(2+). Zn(2+) is bound by residues Cys595, Cys597, Cys620, and Cys633. The segment at 595–642 (CNCGRRAKRLTVSNAGPNQGKAFYTCSVKKRNEENKKGCDYFKWEQTV) adopts a GRF-type zinc-finger fold.

This sequence belongs to the ERI2 family. It depends on Mg(2+) as a cofactor.

The protein is ERI1 exoribonuclease 2 (eri2) of Xenopus laevis (African clawed frog).